A 485-amino-acid polypeptide reads, in one-letter code: MTITPQNLIALLPLLIVGLTVVVVMLSIAWRRNHFLNATLSVIGLNAALVSLWFVGQAGAMDVTPLMRVDGFAMLYTGLVLLASLATCTFAYPWLEGYNDNKDEFYLLVLIAALGGILLANANHLASLFLGIELISLPLFGLVGYAFRQKRSLEASIKYTILSAAASSFLLFGMALVYAQSGDLSFVALGKNLGDGMLNEPLLLAGFGLMIVGLGFKLSLVPFHLWTPDVYQGAPAPVSTFLATASKIAIFGVVMRLFLYAPVGDSEAIRVVLAIIAFASIIFGNLMALSQTNIKRLLGYSSISHLGYLLVALIALQTGEMSMEAVGVYLVGYLFSSLGAFGVVSLMSSPYRGPDADSLFSYRGLFWHRPILAAVMTVMMLSLAGIPMTLGFIGKFYVLAVGVQAHLWWLVGAVVVGSAIGLYYYLRVAVSLYLHAPEQPGRDAPSNWQYSAGGIVVLISALLVLVLGVWPQPLISIVRLAMPLM.

Helical transmembrane passes span 8 to 28 (LIAL…MLSI), 35 to 55 (FLNA…LWFV), 71 to 91 (GFAM…CTFA), 105 to 125 (FYLL…ANHL), 127 to 147 (SLFL…GYAF), 159 to 179 (YTIL…LVYA), 203 to 223 (LLAG…LVPF), 235 to 255 (PAPV…GVVM), 271 to 291 (VVLA…ALSQ), 297 to 317 (LLGY…IALQ), 326 to 346 (VGVY…VVSL), 373 to 393 (AAVM…LGFI), 408 to 430 (WWLV…RVAV), and 455 to 475 (IVVL…QPLI).

It belongs to the complex I subunit 2 family. NDH-1 is composed of 13 different subunits. Subunits NuoA, H, J, K, L, M, N constitute the membrane sector of the complex.

Its subcellular location is the cell inner membrane. It carries out the reaction a quinone + NADH + 5 H(+)(in) = a quinol + NAD(+) + 4 H(+)(out). NDH-1 shuttles electrons from NADH, via FMN and iron-sulfur (Fe-S) centers, to quinones in the respiratory chain. The immediate electron acceptor for the enzyme in this species is believed to be ubiquinone. Couples the redox reaction to proton translocation (for every two electrons transferred, four hydrogen ions are translocated across the cytoplasmic membrane), and thus conserves the redox energy in a proton gradient. The chain is NADH-quinone oxidoreductase subunit N from Escherichia coli O1:K1 / APEC.